We begin with the raw amino-acid sequence, 100 residues long: Protein E7 (100 aa).

An E7 terminal domain region spans residues 1–42 (MRGAAPTVADLNLELNDLVLPANLLSEEVLQSSDDEYEITEE). The segment at 54–91 (CYRCEVAVRITLYAAELGLRTLEQLLVEGKLTFCCTAC) is a zinc-finger region. Residues 72-80 (LRTLEQLLV) carry the Nuclear export signal motif.

The protein belongs to the papillomaviridae E7 protein family. In terms of assembly, homodimer. Homooligomer. Interacts with host RB1; this interaction induces dissociation of RB1-E2F1 complex thereby disrupting RB1 activity. Interacts with host EP300; this interaction represses EP300 transcriptional activity. Interacts with protein E2; this interaction inhibits E7 oncogenic activity. Interacts with host TMEM173/STING; this interaction impairs the ability of TMEM173/STING to sense cytosolic DNA and promote the production of type I interferon (IFN-alpha and IFN-beta). In terms of processing, highly phosphorylated.

The protein localises to the host cytoplasm. The protein resides in the host nucleus. Plays a role in viral genome replication by driving entry of quiescent cells into the cell cycle. Stimulation of progression from G1 to S phase allows the virus to efficiently use the cellular DNA replicating machinery to achieve viral genome replication. E7 protein has both transforming and trans-activating activities. Induces the disassembly of the E2F1 transcription factor from RB1, with subsequent transcriptional activation of E2F1-regulated S-phase genes. Interferes with host histone deacetylation mediated by HDAC1 and HDAC2, leading to transcription activation. Also plays a role in the inhibition of both antiviral and antiproliferative functions of host interferon alpha. Interaction with host TMEM173/STING impairs the ability of TMEM173/STING to sense cytosolic DNA and promote the production of type I interferon (IFN-alpha and IFN-beta). This Human papillomavirus 4 protein is Protein E7.